Reading from the N-terminus, the 486-residue chain is Galactose-1-phosphate uridylyltransferase (486 aa).

The protein belongs to the galactose-1-phosphate uridylyltransferase type 2 family.

The protein localises to the cytoplasm. It carries out the reaction alpha-D-galactose 1-phosphate + UDP-alpha-D-glucose = alpha-D-glucose 1-phosphate + UDP-alpha-D-galactose. Its pathway is carbohydrate metabolism; galactose metabolism. The sequence is that of Galactose-1-phosphate uridylyltransferase from Pediococcus pentosaceus (strain ATCC 25745 / CCUG 21536 / LMG 10740 / 183-1w).